Reading from the N-terminus, the 36-residue chain is Glucagon-1 (36 aa).

This sequence belongs to the glucagon family.

The protein resides in the secreted. Functionally, promotes hydrolysis of glycogen and lipids, and raises the blood sugar level. This chain is Glucagon-1 (gcg1), found in Oreochromis niloticus (Nile tilapia).